We begin with the raw amino-acid sequence, 625 residues long: tRNA uridine 5-carboxymethylaminomethyl modification enzyme MnmG (625 aa).

Residue Gly-11 to Gly-16 coordinates FAD. Gly-271–Phe-285 is an NAD(+) binding site.

It belongs to the MnmG family. As to quaternary structure, homodimer. Heterotetramer of two MnmE and two MnmG subunits. Requires FAD as cofactor.

Its subcellular location is the cytoplasm. Functionally, NAD-binding protein involved in the addition of a carboxymethylaminomethyl (cmnm) group at the wobble position (U34) of certain tRNAs, forming tRNA-cmnm(5)s(2)U34. In Parabacteroides distasonis (strain ATCC 8503 / DSM 20701 / CIP 104284 / JCM 5825 / NCTC 11152), this protein is tRNA uridine 5-carboxymethylaminomethyl modification enzyme MnmG.